We begin with the raw amino-acid sequence, 486 residues long: MKIVIKLSPEITIKSRAIRIFFIKILITNIKTILKKNNESASIIRNWDYLEVICNHSKYQKICAMLINIPGIHHLLLIKKHMFRSLQDIYEKIILSLNYEIQLSGKSFCVRVKRCGKHNFTSQEVEHYLGNKLCQNIGNIRVNLTKPEKTIYLEIKDNQLFIIIKRYEGLGGFPIGTQQEMLSLISGGFDSAVASYMLIRRGCKVNYCFFNLGGDMHTVEVCRVIYFLWNKFSSSHKIKFISIDFSEVIKEITAKIKDNQIGVVLKRMMIRSASLVANRYKITALITGEVLGQVSSQTLSNLTLIDSVSDHVIFRPLIAYDKEKIIDLARKIGTEILSKSVPEYCGIISKKSTAKTTKQLIEFEENNFDFTVLNRAVSQSYVIDVQNIPDQIINQHVFQVETKKILDSTDVVLDIRTEIEQEKNPLYLNNIEIKKIPFYNLIDQFSKLDPNKIYLLYCDHGIMSRLQVMYLHRQGFSNVKIYRPPR.

Positions 60-166 (QKICAMLINI…DNQLFIIIKR (107 aa)) constitute a THUMP domain. ATP is bound by residues 184–185 (LI), K266, G288, and Q297. A disulfide bridge links C345 with C458. The 79-residue stretch at 406 to 484 (LDSTDVVLDI…GFSNVKIYRP (79 aa)) folds into the Rhodanese domain. The Cysteine persulfide intermediate role is filled by C458.

This sequence belongs to the ThiI family.

The protein resides in the cytoplasm. The enzyme catalyses [ThiI sulfur-carrier protein]-S-sulfanyl-L-cysteine + a uridine in tRNA + 2 reduced [2Fe-2S]-[ferredoxin] + ATP + H(+) = [ThiI sulfur-carrier protein]-L-cysteine + a 4-thiouridine in tRNA + 2 oxidized [2Fe-2S]-[ferredoxin] + AMP + diphosphate. It catalyses the reaction [ThiS sulfur-carrier protein]-C-terminal Gly-Gly-AMP + S-sulfanyl-L-cysteinyl-[cysteine desulfurase] + AH2 = [ThiS sulfur-carrier protein]-C-terminal-Gly-aminoethanethioate + L-cysteinyl-[cysteine desulfurase] + A + AMP + 2 H(+). Its pathway is cofactor biosynthesis; thiamine diphosphate biosynthesis. Catalyzes the ATP-dependent transfer of a sulfur to tRNA to produce 4-thiouridine in position 8 of tRNAs, which functions as a near-UV photosensor. Also catalyzes the transfer of sulfur to the sulfur carrier protein ThiS, forming ThiS-thiocarboxylate. This is a step in the synthesis of thiazole, in the thiamine biosynthesis pathway. The sulfur is donated as persulfide by IscS. The polypeptide is tRNA sulfurtransferase (Blochmanniella pennsylvanica (strain BPEN)).